The chain runs to 389 residues: Formate-dependent phosphoribosylglycinamide formyltransferase (389 aa).

Residues 15-16 (EL) and Glu-75 contribute to the N(1)-(5-phospho-beta-D-ribosyl)glycinamide site. Residues Arg-107, Lys-148, 153-158 (SSGKGQ), 188-191 (EEFL), and Glu-196 contribute to the ATP site. In terms of domain architecture, ATP-grasp spans 112–302 (NLAAGELGLR…EFDLHLRAVL (191 aa)). 2 residues coordinate Mg(2+): Glu-261 and Glu-273. N(1)-(5-phospho-beta-D-ribosyl)glycinamide is bound by residues Asp-280, Lys-350, and 357–358 (RR).

It belongs to the PurK/PurT family. As to quaternary structure, homodimer.

It carries out the reaction N(1)-(5-phospho-beta-D-ribosyl)glycinamide + formate + ATP = N(2)-formyl-N(1)-(5-phospho-beta-D-ribosyl)glycinamide + ADP + phosphate + H(+). Its pathway is purine metabolism; IMP biosynthesis via de novo pathway; N(2)-formyl-N(1)-(5-phospho-D-ribosyl)glycinamide from N(1)-(5-phospho-D-ribosyl)glycinamide (formate route): step 1/1. In terms of biological role, involved in the de novo purine biosynthesis. Catalyzes the transfer of formate to 5-phospho-ribosyl-glycinamide (GAR), producing 5-phospho-ribosyl-N-formylglycinamide (FGAR). Formate is provided by PurU via hydrolysis of 10-formyl-tetrahydrofolate. This chain is Formate-dependent phosphoribosylglycinamide formyltransferase, found in Synechococcus sp. (strain CC9311).